Here is a 53-residue protein sequence, read N- to C-terminus: UPF0391 membrane protein BPSS2216 (53 aa).

A run of 2 helical transmembrane segments spans residues 5–25 and 30–50; these read ALVF…GIAA and IAKI…VLGV.

This sequence belongs to the UPF0391 family.

It is found in the cell membrane. This chain is UPF0391 membrane protein BPSS2216, found in Burkholderia pseudomallei (strain K96243).